The following is an 81-amino-acid chain: Keratin-associated protein 19-3 (81 aa).

This sequence belongs to the KRTAP type 19 family. In terms of assembly, interacts with hair keratins.

In the hair cortex, hair keratin intermediate filaments are embedded in an interfilamentous matrix, consisting of hair keratin-associated proteins (KRTAP), which are essential for the formation of a rigid and resistant hair shaft through their extensive disulfide bond cross-linking with abundant cysteine residues of hair keratins. The matrix proteins include the high-sulfur and high-glycine-tyrosine keratins. The sequence is that of Keratin-associated protein 19-3 (KRTAP19-3) from Homo sapiens (Human).